Reading from the N-terminus, the 377-residue chain is Actin-related protein T2 (377 aa).

This sequence belongs to the actin family.

Its subcellular location is the cytoplasm. The protein resides in the cytoskeleton. The polypeptide is Actin-related protein T2 (ACTRT2) (Bos taurus (Bovine)).